The chain runs to 107 residues: Phosphoribosyl-ATP pyrophosphatase (107 aa).

This sequence belongs to the PRA-PH family.

It is found in the cytoplasm. The catalysed reaction is 1-(5-phospho-beta-D-ribosyl)-ATP + H2O = 1-(5-phospho-beta-D-ribosyl)-5'-AMP + diphosphate + H(+). It participates in amino-acid biosynthesis; L-histidine biosynthesis; L-histidine from 5-phospho-alpha-D-ribose 1-diphosphate: step 2/9. This is Phosphoribosyl-ATP pyrophosphatase (hisE) from Caulobacter vibrioides (strain ATCC 19089 / CIP 103742 / CB 15) (Caulobacter crescentus).